The chain runs to 337 residues: 1-aminocyclopropane-1-carboxylate deaminase (337 aa).

Lys50 bears the N6-(pyridoxal phosphate)lysine mark. Ser77 serves as the catalytic Nucleophile.

It belongs to the ACC deaminase/D-cysteine desulfhydrase family. In terms of assembly, homotrimer. Pyridoxal 5'-phosphate serves as cofactor.

It catalyses the reaction 1-aminocyclopropane-1-carboxylate + H2O = 2-oxobutanoate + NH4(+). Catalyzes a cyclopropane ring-opening reaction, the irreversible conversion of 1-aminocyclopropane-1-carboxylate (ACC) to ammonia and alpha-ketobutyrate. Allows growth on ACC as a nitrogen source. The chain is 1-aminocyclopropane-1-carboxylate deaminase from Allorhizobium ampelinum (strain ATCC BAA-846 / DSM 112012 / S4) (Agrobacterium vitis (strain S4)).